A 110-amino-acid chain; its full sequence is Large ribosomal subunit protein uL22 (110 aa).

This sequence belongs to the universal ribosomal protein uL22 family. As to quaternary structure, part of the 50S ribosomal subunit.

In terms of biological role, this protein binds specifically to 23S rRNA; its binding is stimulated by other ribosomal proteins, e.g. L4, L17, and L20. It is important during the early stages of 50S assembly. It makes multiple contacts with different domains of the 23S rRNA in the assembled 50S subunit and ribosome. The globular domain of the protein is located near the polypeptide exit tunnel on the outside of the subunit, while an extended beta-hairpin is found that lines the wall of the exit tunnel in the center of the 70S ribosome. This chain is Large ribosomal subunit protein uL22, found in Colwellia psychrerythraea (strain 34H / ATCC BAA-681) (Vibrio psychroerythus).